Consider the following 247-residue polypeptide: Probable transcriptional regulatory protein LPC_0711 (247 aa).

Belongs to the TACO1 family.

It is found in the cytoplasm. The chain is Probable transcriptional regulatory protein LPC_0711 from Legionella pneumophila (strain Corby).